Reading from the N-terminus, the 660-residue chain is Arginine--tRNA ligase, cytoplasmic (660 aa).

M1 carries the post-translational modification N-acetylmethionine. The interval 1–72 (MDVLVSECSA…QAERNKPTKN (72 aa)) is could be involved in the assembly of the multisynthetase complex. Residues 200 to 202 (SPN), H211, Y384, D388, and Q412 each bind L-arginine. The short motif at 201–212 (PNIAKEMHVGHL) is the 'HIGH' region element. The interaction with tRNA stretch occupies residues 529–543 (NTAAYLLYAFTRIRS).

Belongs to the class-I aminoacyl-tRNA synthetase family. In terms of assembly, interacts (via N-terminus) with AIMP1 (via N-terminus); this stimulates its catalytic activity. Interacts (via N-terminus) with LARS2 (via C-terminus). Monomer. Part of a multisubunit complex that groups tRNA ligases for Arg (RARS1), Asp (DARS1), Gln (QARS1), Ile (IARS1), Leu (LARS1), Lys (KARS1), Met (MARS1) the bifunctional ligase for Glu and Pro (EPRS1) and the auxiliary subunits AIMP1/p43, AIMP2/p38 and EEF1E1/p18. Interacts with QARS1. Part of a complex composed of RARS1, QARS1 and AIMP1.

Its subcellular location is the cytoplasm. The protein resides in the cytosol. It catalyses the reaction tRNA(Arg) + L-arginine + ATP = L-arginyl-tRNA(Arg) + AMP + diphosphate. Functionally, forms part of a macromolecular complex that catalyzes the attachment of specific amino acids to cognate tRNAs during protein synthesis. Modulates the secretion of AIMP1 and may be involved in generation of the inflammatory cytokine EMAP2 from AIMP1. This Homo sapiens (Human) protein is Arginine--tRNA ligase, cytoplasmic.